Reading from the N-terminus, the 216-residue chain is 3-isopropylmalate dehydratase small subunit (216 aa).

The protein belongs to the LeuD family. LeuD type 1 subfamily. Heterodimer of LeuC and LeuD.

The enzyme catalyses (2R,3S)-3-isopropylmalate = (2S)-2-isopropylmalate. The protein operates within amino-acid biosynthesis; L-leucine biosynthesis; L-leucine from 3-methyl-2-oxobutanoate: step 2/4. In terms of biological role, catalyzes the isomerization between 2-isopropylmalate and 3-isopropylmalate, via the formation of 2-isopropylmaleate. The protein is 3-isopropylmalate dehydratase small subunit of Polaromonas naphthalenivorans (strain CJ2).